We begin with the raw amino-acid sequence, 190 residues long: Small ribosomal subunit protein eS7x (190 aa).

N-acetylmethionine is present on M1. Positions 17–50 (TECEEQVAQALFDLENTNQELKSELKDLYINQAV) form a coiled coil.

Belongs to the eukaryotic ribosomal protein eS7 family.

The polypeptide is Small ribosomal subunit protein eS7x (RPS7C) (Arabidopsis thaliana (Mouse-ear cress)).